Consider the following 657-residue polypeptide: Histidine ammonia-lyase (657 aa).

Residues 253–255 constitute a cross-link (5-imidazolinone (Ala-Gly)); sequence ASG. S254 is subject to 2,3-didehydroalanine (Ser). T396 carries the phosphothreonine modification. S635 bears the Phosphoserine mark. At T637 the chain carries Phosphothreonine. S648 is modified (phosphoserine).

The protein belongs to the PAL/histidase family. Post-translationally, contains an active site 4-methylidene-imidazol-5-one (MIO), which is formed autocatalytically by cyclization and dehydration of residues Ala-Ser-Gly.

It catalyses the reaction L-histidine = trans-urocanate + NH4(+). The protein operates within amino-acid degradation; L-histidine degradation into L-glutamate; N-formimidoyl-L-glutamate from L-histidine: step 1/3. This Homo sapiens (Human) protein is Histidine ammonia-lyase (HAL).